Reading from the N-terminus, the 156-residue chain is Glutaredoxin-2, mitochondrial (156 aa).

The N-terminal 19 residues, 1-19, are a transit peptide targeting the mitochondrion; that stretch reads MSWRRAASVGRRLVASGRI. The Glutaredoxin domain maps to 50-150; it reads VNQIQETISN…PLVHQCYLKK (101 aa). Residue Cys61 coordinates [2Fe-2S] cluster. Lys67 serves as a coordination point for glutathione. Cys70 is modified (S-glutathionyl cysteine; alternate). A disulfide bridge links Cys70 with Cys73. Gln102 and Val114 together coordinate glutathione. Cys146 provides a ligand contact to [2Fe-2S] cluster.

The protein belongs to the glutaredoxin family. In terms of assembly, monomer; active form. Homodimer; inactive form. The homodimer is probably linked by 1 2Fe-2S cluster. In terms of tissue distribution, widely expressed. Highly expressed in testis, and at much lower level in kidney and brain.

Its subcellular location is the mitochondrion. It localises to the nucleus. The 2Fe-2S present in the homodimer leads to inactivation of the enzyme. The 2Fe-2S may serve as a redox sensor: the presence of one-electron oxidants or reductants leading to the loss of the 2Fe-2S cluster, subsequent monomerization and activation of the enzyme. Functionally, glutathione-dependent oxidoreductase that facilitates the maintenance of mitochondrial redox homeostasis upon induction of apoptosis by oxidative stress. Involved in response to hydrogen peroxide and regulation of apoptosis caused by oxidative stress. Acts as a very efficient catalyst of monothiol reactions because of its high affinity for protein glutathione-mixed disulfides. Can receive electrons not only from glutathione (GSH), but also from thioredoxin reductase supporting both monothiol and dithiol reactions. Efficiently catalyzes both glutathionylation and deglutathionylation of mitochondrial complex I, which in turn regulates the superoxide production by the complex. Overexpression decreases the susceptibility to apoptosis and prevents loss of cardiolipin and cytochrome c release. This Mus musculus (Mouse) protein is Glutaredoxin-2, mitochondrial (Glrx2).